A 340-amino-acid polypeptide reads, in one-letter code: Protein SSUH2 homolog (340 aa).

The span at 1–11 (MDRDPSEEDSM) shows a compositional bias: acidic residues. Positions 1–20 (MDRDPSEEDSMADLSFEAES) are disordered.

Widely expressed, with highest levels in the liver, intestine, tongue and underjaw.

The protein resides in the cytoplasm. It is found in the nucleus. Plays a role in odontogenesis. The protein is Protein SSUH2 homolog of Mus musculus (Mouse).